A 470-amino-acid chain; its full sequence is Cannabinoid receptor type 1B (470 aa).

The Extracellular portion of the chain corresponds to 1-113; sequence MKLALHRIAG…CFMILTPAQQ (113 aa). Residues asparagine 78 and asparagine 86 are each glycosylated (N-linked (GlcNAc...) asparagine). Residues 114–139 form a helical membrane-spanning segment; the sequence is LVIVILAITLGTFTVLENFVVLCVIL. Topologically, residues 140–151 are cytoplasmic; sequence HSHTLRSRPSYH. The helical transmembrane segment at 152–172 threads the bilayer; that stretch reads FIGSLAVADLIGSIIFVYSFL. Residues 173–184 lie on the Extracellular side of the membrane; the sequence is DFHVLHRKDSPS. A helical transmembrane segment spans residues 185–209; the sequence is IFLFKLAGVIASFTASVGSLFLTAI. The Cytoplasmic segment spans residues 210–229; it reads DRYVSIHRPMAYKRIITKTK. A helical membrane pass occupies residues 230 to 252; sequence AVIAFSVMWAISIEFSLLPLLGW. Over 253–270 the chain is Extracellular; it reads NCKRLHSVCSDIFPLIDE. Residues 271–296 traverse the membrane as a helical segment; sequence KYLMFWIGMTTVLLLFIIYAYMFILW. At 297-341 the chain is on the cytoplasmic side; the sequence is KSHHHAVRMLSRSSQRSIIVYTSEGTKVQTVRPEQARMDLRLAKT. Residues 342–362 form a helical membrane-spanning segment; it reads LVLILVALIICWGPLLAIMVY. At 363 to 374 the chain is on the extracellular side; that stretch reads DLFGRVNDFIKT. The chain crosses the membrane as a helical span at residues 375-396; the sequence is VFAFCSMLCLLNSTINPVIYAM. Topologically, residues 397–470 are cytoplasmic; it reads RSKDLRRAFV…VTASSPAEAV (74 aa). Cysteine 412 is lipidated: S-palmitoyl cysteine. Residues 418 to 434 are compositionally biased toward polar residues; the sequence is SLDSSAESDWNSRSVRS. Residues 418 to 450 form a disordered region; it reads SLDSSAESDWNSRSVRSTGGRAGKDRSVGGKPQ.

The protein belongs to the G-protein coupled receptor 1 family. Post-translationally, palmitoylation at Cys-412 is important for recruitment at both plasma membrane and lipid rafts and association with G protein alpha subunits.

The protein localises to the cell membrane. It localises to the mitochondrion outer membrane. Its subcellular location is the cell projection. The protein resides in the axon. It is found in the presynapse. In terms of biological role, G-protein coupled receptor for cannabinoids. Mediates many cannabinoid-induced effects in the central nervous system (CNS), as well as in peripheral tissues. Regulates cellular respiration and energy production in response to cannabinoids. Signaling typically involves reduction in cyclic AMP. In Takifugu rubripes (Japanese pufferfish), this protein is Cannabinoid receptor type 1B (cnr1b).